The chain runs to 540 residues: Bifunctional ribokinase/ribose-5-phosphate isomerase A (540 aa).

The segment at 1–308 is ribokinase; sequence MKKIIVVGST…AILNVINQDQ (308 aa). Residues 11–13, 39–44, and Glu141 contribute to the substrate site; these read NVD and GGKGAN. ATP contacts are provided by residues Asn185 and 221–226; that span reads TVGGRG. Positions 247 and 249 each coordinate K(+). 252–253 provides a ligand contact to ATP; that stretch reads GD. Asp253 is a binding site for substrate. Residue Asp253 is the Proton acceptor; for ribokinase activity of the active site. Thr284, Val287, Gly289, and Ser293 together coordinate K(+). A ribose-5-phosphate isomerase A region spans residues 309 to 540; sequence MTKTEIEKQK…IKTIKRSDLS (232 aa). Residues 339 to 342, 395 to 398, and 408 to 411 contribute to the substrate site; these read SGTT, DGAD, and KGGG. The active-site Proton acceptor; for ribose-5-phosphate isomerase activity is Glu417. Residue Lys435 participates in substrate binding.

This sequence in the N-terminal section; belongs to the carbohydrate kinase PfkB family. Ribokinase subfamily. In the C-terminal section; belongs to the ribose 5-phosphate isomerase family. Mg(2+) is required as a cofactor.

The protein localises to the cytoplasm. It carries out the reaction D-ribose + ATP = D-ribose 5-phosphate + ADP + H(+). It catalyses the reaction aldehydo-D-ribose 5-phosphate = D-ribulose 5-phosphate. The protein operates within carbohydrate metabolism; D-ribose degradation; D-ribose 5-phosphate from beta-D-ribopyranose: step 2/2. It participates in carbohydrate degradation; pentose phosphate pathway; D-ribose 5-phosphate from D-ribulose 5-phosphate (non-oxidative stage): step 1/1. Its activity is regulated as follows. Activated by a monovalent cation that binds near, but not in, the active site. The most likely occupant of the site in vivo is potassium. Also activated by ammonium ion. Ion binding induces a conformational change that may alter substrate affinity. Its function is as follows. Bifunctional enzyme that catalyzes the phosphorylation of ribose at O-5 in a reaction requiring ATP and magnesium, and the reversible conversion of ribose 5-phosphate to ribulose 5-phosphate. This chain is Bifunctional ribokinase/ribose-5-phosphate isomerase A (rbsK/rbiA), found in Fructilactobacillus sanfranciscensis (strain ATCC 27651 / DSM 20451 / JCM 5668 / CCUG 30143 / KCTC 3205 / NCIMB 702811 / NRRL B-3934 / L-12) (Lactobacillus sanfranciscensis).